Here is a 331-residue protein sequence, read N- to C-terminus: UPF0194 membrane protein YbhG (331 aa).

A signal peptide spans 1–19 (MKKPVVIGLAIAAIVAVIA). The stretch at 107-208 (EEIAQAAAAV…LDLQDTTLIA (102 aa)) forms a coiled coil.

This sequence belongs to the UPF0194 family.

It is found in the periplasm. The polypeptide is UPF0194 membrane protein YbhG (Salmonella gallinarum (strain 287/91 / NCTC 13346)).